The sequence spans 98 residues: NADH-ubiquinone oxidoreductase chain 4L (98 aa).

Helical transmembrane passes span 1 to 21, 29 to 49, and 61 to 81; these read MPVVYVNIFLAFIVSLMGLLV, SLLCLEGMMLSLFVMLTVTVL, and IILLVFAACEAALGLSLLVMV.

It belongs to the complex I subunit 4L family. In terms of assembly, core subunit of respiratory chain NADH dehydrogenase (Complex I) which is composed of 45 different subunits.

It localises to the mitochondrion inner membrane. The enzyme catalyses a ubiquinone + NADH + 5 H(+)(in) = a ubiquinol + NAD(+) + 4 H(+)(out). In terms of biological role, core subunit of the mitochondrial membrane respiratory chain NADH dehydrogenase (Complex I) which catalyzes electron transfer from NADH through the respiratory chain, using ubiquinone as an electron acceptor. Part of the enzyme membrane arm which is embedded in the lipid bilayer and involved in proton translocation. This chain is NADH-ubiquinone oxidoreductase chain 4L (MT-ND4L), found in Ursus arctos (Brown bear).